Reading from the N-terminus, the 1166-residue chain is Serine/threonine-protein kinase BRI1-like 1 (1166 aa).

A signal peptide spans 1–21; the sequence is MKQRWLLVLILCFFTTSLVMG. Residues 22–776 lie on the Extracellular side of the membrane; sequence IHGKHLINDD…IHAKKQTVAT (755 aa). Asn33 is a glycosylation site (N-linked (GlcNAc...) asparagine). Residues 66–73 carry the Cys pair 1 motif; it reads CSWRGVSC. LRR repeat units lie at residues 78-99, 103-124, 126-147, 152-173, 176-197, 202-224, 227-248, 252-274, 278-300, 303-325, 327-349, 352-375, 376-397, 403-424, 427-449, 451-473, 476-498, 500-522, 524-547, and 548-570; these read RIVGLDLRNSGLTGTLNLVNLT, NLQNLYLQGNYFSSGGDSSGSD, YLQVLDLSSNSISDYSMVDYVF, NLVSVNISNNKLVGKLGFAPSS, SLTTVDLSYNILSDKIPESFIS, SLKYLDLTHNNLSGDFSDLSFGI, NLTFFSLSQNNLSGDKFPITLP, FLETLNISRNNLAGKIPNGEYWG, NLKQLSLAHNRLSGEIPPELSLL, TLVILDLSGNTFSGELPSQFTAC, WLQNLNLGNNYLSGDFLNTVVSK, GITYLYVAYNNISGSVPISLTNCS, NLRVLDLSSNGFTGNVPSGFCS, VLEKILIANNYLSGTVPMELGK, SLKTIDLSFNELTGPIPKEIWML, NLSDLVMWANNLTGTIPEGVCVK, NLETLILNNNLLTGSIPESISRC, NMIWISLSSNRLTGKIPSGIGNL, KLAILQLGNNSLSGNVPRQLGNCK, and SLIWLDLNSNNLTGDLPGELASQ. Asn97 carries N-linked (GlcNAc...) asparagine glycosylation. A glycan (N-linked (GlcNAc...) asparagine) is linked at Asn157. 4 N-linked (GlcNAc...) asparagine glycosylation sites follow: Asn212, Asn227, Asn237, and Asn257. Asn362 and Asn373 each carry an N-linked (GlcNAc...) asparagine glycan. N-linked (GlcNAc...) asparagine glycans are attached at residues Asn451 and Asn461. 4 N-linked (GlcNAc...) asparagine glycosylation sites follow: Asn521, Asn532, Asn558, and Asn638. 3 LRR repeats span residues 664–686, 688–710, and 712–734; these read YLQVLNLGHNRITGTIPDSFGGL, AIGVLDLSHNNLQGYLPGSLGSL, and FLSDLDVSNNNLTGPIPFGGQLT. Asn722 and Asn743 each carry an N-linked (GlcNAc...) asparagine glycan. The Cys pair 2 motif lies at 748-755; the sequence is CGVPLRPC. A helical membrane pass occupies residues 777 to 797; it reads AVIAGIAFSFMCFVMLVMALY. Topologically, residues 798-1166 are cytoplasmic; that stretch reads RVRKVQKKEQ…LVEESRDKEP (369 aa). Thr848 and Thr856 each carry phosphothreonine. One can recognise a Protein kinase domain in the interval 859–1147; the sequence is FSAETMVGSG…KADTEEDESL (289 aa). ATP is bound by residues 865-873 and Lys887; that span reads VGSGGFGEV. At Tyr932 the chain carries Phosphotyrosine. Asp987 functions as the Proton acceptor in the catalytic mechanism. The residue at position 1022 (Ser1022) is a Phosphoserine. Position 1030 is a phosphotyrosine (Tyr1030). Thr1141 carries the post-translational modification Phosphothreonine. The segment at 1142-1166 is disordered; that stretch reads EEDESLDEFSLKETPLVEESRDKEP.

It belongs to the protein kinase superfamily. Ser/Thr protein kinase family. As to expression, predominantly expressed in vascular tissues. From 7 day old seedlings, it is expressed in the columella cells of the root tip, in the vascular initials in the meristematic region of the root and in vascular tissues. After germination, it is expressed in the stele cell and in the early differentiation zone of the root, where the expression continues from the root to the hypocotyls and cotyledons following the midvein. In mature plants, it is expressed in the vasculature of the leaf, predominantly in the midvein, and in the vascular bundles of inflorescence stems. Localizes to procambial cells of the vascular bundles located between the differentiating xylem and the phloem.

It is found in the cell membrane. It carries out the reaction L-seryl-[protein] + ATP = O-phospho-L-seryl-[protein] + ADP + H(+). The enzyme catalyses L-threonyl-[protein] + ATP = O-phospho-L-threonyl-[protein] + ADP + H(+). Functionally, receptor with a serine/threonine-protein kinase activity. Regulates, in response to brassinosteroid binding, a signaling cascade involved in plant development. Binds brassinolide. May be involved in cell growth and vascular differentiation. The polypeptide is Serine/threonine-protein kinase BRI1-like 1 (BRL1) (Arabidopsis thaliana (Mouse-ear cress)).